A 337-amino-acid polypeptide reads, in one-letter code: Pyridoxal 5'-phosphate synthase subunit PdxS (337 aa).

D65 serves as a coordination point for D-ribose 5-phosphate. K122 functions as the Schiff-base intermediate with D-ribose 5-phosphate in the catalytic mechanism. A D-ribose 5-phosphate-binding site is contributed by G194. D-glyceraldehyde 3-phosphate is bound at residue K206. D-ribose 5-phosphate-binding positions include G255 and 276 to 277 (GS).

The protein belongs to the PdxS/SNZ family. As to quaternary structure, in the presence of PdxT, forms a dodecamer of heterodimers.

The catalysed reaction is aldehydo-D-ribose 5-phosphate + D-glyceraldehyde 3-phosphate + L-glutamine = pyridoxal 5'-phosphate + L-glutamate + phosphate + 3 H2O + H(+). It functions in the pathway cofactor biosynthesis; pyridoxal 5'-phosphate biosynthesis. Its function is as follows. Catalyzes the formation of pyridoxal 5'-phosphate from ribose 5-phosphate (RBP), glyceraldehyde 3-phosphate (G3P) and ammonia. The ammonia is provided by the PdxT subunit. Can also use ribulose 5-phosphate and dihydroxyacetone phosphate as substrates, resulting from enzyme-catalyzed isomerization of RBP and G3P, respectively. The protein is Pyridoxal 5'-phosphate synthase subunit PdxS of Pyrobaculum arsenaticum (strain DSM 13514 / JCM 11321 / PZ6).